The sequence spans 440 residues: Xaa-Pro dipeptidase (440 aa).

The Mn(2+) site is built by aspartate 244, aspartate 255, histidine 335, glutamate 380, and glutamate 419.

It belongs to the peptidase M24B family. Bacterial-type prolidase subfamily. Mn(2+) serves as cofactor.

The catalysed reaction is Xaa-L-Pro dipeptide + H2O = an L-alpha-amino acid + L-proline. Splits dipeptides with a prolyl residue in the C-terminal position. The sequence is that of Xaa-Pro dipeptidase from Shewanella putrefaciens (strain CN-32 / ATCC BAA-453).